The chain runs to 1396 residues: Melanoma inhibitory activity protein 2 (1396 aa).

Positions 1–22 are cleaved as a signal peptide; that stretch reads MAEVSVQRILLLVVSLAKCLEG. Topologically, residues 23–604 are lumenal; it reads TKLLAHLKKC…YGFMSSALSP (582 aa). The 63-residue stretch at 39 to 101 folds into the SH3 domain; the sequence is TLISRVLALR…PRDAVEIEEV (63 aa). N-linked (GlcNAc...) asparagine glycosylation is present at Asn-59. Disordered regions lie at residues 197–288 and 331–361; these read EGAG…VPDE and ESNP…TDKE. Over residues 243 to 258 the composition is skewed to acidic residues; that stretch reads SDTEPTQELALEEESD. Asn-366 carries an N-linked (GlcNAc...) asparagine glycan. 2 disordered regions span residues 396–421 and 525–557; these read DKGE…PEKE and PMEE…ELSV. An intramembrane segment occupies 605 to 625; that stretch reads IEILLESVVAALPEDMRADFN. Residues 626-628 are Lumenal-facing; the sequence is PSG. The chain crosses the membrane as a helical span at residues 629–649; that stretch reads FSLELAVCVLSVGLLAVVLFL. The Cytoplasmic segment spans residues 650 to 1396; it reads WRGFRSIRSR…AADPPETQEA (747 aa). The tract at residues 651 to 1243 is mediates interaction with MIA3; that stretch reads RGFRSIRSRF…RSYNMPSLDK (593 aa). Coiled-coil stretches lie at residues 693–867 and 914–1082; these read YEGL…LVTS and AAKL…NRQK. The segment at 1103–1396 is disordered; the sequence is PNTAFGREHS…AADPPETQEA (294 aa). The segment at 1105-1396 is proline-rich domain (PRD); probably mediates interaction with COPII coat subunits; the sequence is TAFGREHSPY…AADPPETQEA (292 aa). Positions 1135 to 1146 are enriched in low complexity; that stretch reads LLEGPLRLSPLL. A compositionally biased stretch (basic and acidic residues) spans 1165–1179; it reads MNTERGESSYDRLSD. Polar residues predominate over residues 1252–1269; the sequence is MESSGNGTKDNLGNSNVP. Pro residues-rich tracts occupy residues 1331–1342 and 1351–1368; these read RDFPGPPLPPFP and GFPP…PPPH.

Belongs to the MIA/OTOR family. Interacts with MIA3. Interacts with the COPII coat subunits SEC23A, SEC23B and maybe SEC24C. Interacts with PREB; recruits PREB to endoplasmic reticulum exit sites. Interacts with APOB. Isoform 1 is expressed in liver (at protein level). Isoform 2 is highly expressed in liver and weakly in testis.

The protein localises to the endoplasmic reticulum membrane. Its function is as follows. Plays a role in the transport of cargos that are too large to fit into COPII-coated vesicles and require specific mechanisms to be incorporated into membrane-bound carriers and exported from the endoplasmic reticulum. Plays a role in the secretion of lipoproteins, pre-chylomicrons and pre-VLDLs, by participating in their export from the endoplasmic reticulum. Thereby, may play a role in cholesterol and triglyceride homeostasis. Required for collagen VII (COL7A1) secretion by loading COL7A1 into transport carriers and recruiting PREB/SEC12 at the endoplasmic reticulum exit sites. The chain is Melanoma inhibitory activity protein 2 from Mus musculus (Mouse).